Reading from the N-terminus, the 165-residue chain is Ribosome maturation factor RimM (165 aa).

Positions 94-165 constitute a PRC barrel domain; it reads EDEFYIADLN…YVILNYQTKV (72 aa).

The protein belongs to the RimM family. As to quaternary structure, binds ribosomal protein uS19.

The protein localises to the cytoplasm. Its function is as follows. An accessory protein needed during the final step in the assembly of 30S ribosomal subunit, possibly for assembly of the head region. Essential for efficient processing of 16S rRNA. May be needed both before and after RbfA during the maturation of 16S rRNA. It has affinity for free ribosomal 30S subunits but not for 70S ribosomes. This Rickettsia prowazekii (strain Madrid E) protein is Ribosome maturation factor RimM.